A 236-amino-acid polypeptide reads, in one-letter code: Uridylate kinase (236 aa).

12 to 15 (KISG) lines the ATP pocket. Residues 20 to 25 (GTNGYG) are involved in allosteric activation by GTP. UMP is bound at residue Gly54. Residues Gly55 and Arg59 each coordinate ATP. UMP is bound by residues Asp72 and 133–140 (TGNPYFST). 2 residues coordinate ATP: Tyr166 and Asp169.

Belongs to the UMP kinase family. Homohexamer.

It localises to the cytoplasm. It catalyses the reaction UMP + ATP = UDP + ADP. Its pathway is pyrimidine metabolism; CTP biosynthesis via de novo pathway; UDP from UMP (UMPK route): step 1/1. With respect to regulation, allosterically activated by GTP. Inhibited by UTP. Its function is as follows. Catalyzes the reversible phosphorylation of UMP to UDP. This chain is Uridylate kinase, found in Clostridium acetobutylicum (strain ATCC 824 / DSM 792 / JCM 1419 / IAM 19013 / LMG 5710 / NBRC 13948 / NRRL B-527 / VKM B-1787 / 2291 / W).